The chain runs to 361 residues: Phosphoserine aminotransferase (361 aa).

Residue arginine 42 coordinates L-glutamate. Residues 76 to 77 (AR), tryptophan 102, threonine 153, aspartate 173, and glutamine 196 contribute to the pyridoxal 5'-phosphate site. Lysine 197 carries the N6-(pyridoxal phosphate)lysine modification. 238-239 (NT) lines the pyridoxal 5'-phosphate pocket.

This sequence belongs to the class-V pyridoxal-phosphate-dependent aminotransferase family. SerC subfamily. In terms of assembly, homodimer. Pyridoxal 5'-phosphate serves as cofactor.

It localises to the cytoplasm. The enzyme catalyses O-phospho-L-serine + 2-oxoglutarate = 3-phosphooxypyruvate + L-glutamate. It carries out the reaction 4-(phosphooxy)-L-threonine + 2-oxoglutarate = (R)-3-hydroxy-2-oxo-4-phosphooxybutanoate + L-glutamate. It functions in the pathway amino-acid biosynthesis; L-serine biosynthesis; L-serine from 3-phospho-D-glycerate: step 2/3. Its pathway is cofactor biosynthesis; pyridoxine 5'-phosphate biosynthesis; pyridoxine 5'-phosphate from D-erythrose 4-phosphate: step 3/5. Functionally, catalyzes the reversible conversion of 3-phosphohydroxypyruvate to phosphoserine and of 3-hydroxy-2-oxo-4-phosphonooxybutanoate to phosphohydroxythreonine. This chain is Phosphoserine aminotransferase, found in Buchnera aphidicola subsp. Schizaphis graminum (strain Sg).